The sequence spans 387 residues: Eukaryotic translation initiation factor 3 subunit M (387 aa).

The 160-residue stretch at 181-340 (LSSKVMIELL…RKVHISSTMH (160 aa)) folds into the PCI domain.

This sequence belongs to the eIF-3 subunit M family. As to quaternary structure, component of the eukaryotic translation initiation factor 3 (eIF-3) complex. The eIF-3 complex interacts with pix.

The protein localises to the cytoplasm. It localises to the golgi apparatus. Component of the eukaryotic translation initiation factor 3 (eIF-3) complex, which is involved in protein synthesis of a specialized repertoire of mRNAs and, together with other initiation factors, stimulates binding of mRNA and methionyl-tRNAi to the 40S ribosome. The eIF-3 complex specifically targets and initiates translation of a subset of mRNAs involved in cell proliferation. In Drosophila persimilis (Fruit fly), this protein is Eukaryotic translation initiation factor 3 subunit M.